A 546-amino-acid chain; its full sequence is Probable zinc metalloprotease EGY2, chloroplastic (546 aa).

A chloroplast-targeting transit peptide spans 1-64 (MQLPAMSCSP…QIRNRRFVCQ (64 aa)). The segment at 67–143 (TETEPDGDGN…DATPASDAQE (77 aa)) is disordered. Residues 69 to 86 (TEPDGDGNGDEEKEELGD) show a composition bias toward acidic residues. Polar residues-rich tracts occupy residues 89-110 (SSPSVDSVTQENGSAESETNAD) and 118-130 (NTEPLSSSDTVQN). The next 7 helical transmembrane spans lie at 257 to 277 (AVPEWFAAASFGVVTIFTLLL), 301 to 321 (VYGALVTAAIIGVHEIAHILA), 326 to 346 (GIKLAVPYFVPSWQIGSFGAI), 364 to 384 (AAGPLAGFSLGFVLLLLGFIL), 427 to 447 (PLVLWAWAGLLINAINSIPAG), 474 to 494 (LLGISALFNDVAFYWVVLIFF), and 514 to 534 (YISIGVAILLFGLLVCLPYPF).

This sequence belongs to the peptidase M50B family.

It localises to the plastid. The protein localises to the chloroplast membrane. Functionally, probable membrane-associated metalloprotease that may be involved in chloroplast development. This chain is Probable zinc metalloprotease EGY2, chloroplastic (EGY2), found in Oryza sativa subsp. japonica (Rice).